A 518-amino-acid chain; its full sequence is 2,3-bisphosphoglycerate-independent phosphoglycerate mutase (518 aa).

Asp-14 and Ser-64 together coordinate Mn(2+). The Phosphoserine intermediate role is filled by Ser-64. Residues His-125, 155–156 (RD), Arg-187, Arg-193, 264–267 (RPDR), and Lys-337 contribute to the substrate site. Mn(2+) contacts are provided by Asp-404, His-408, Asp-445, His-446, and His-467.

This sequence belongs to the BPG-independent phosphoglycerate mutase family. Mn(2+) serves as cofactor.

The enzyme catalyses (2R)-2-phosphoglycerate = (2R)-3-phosphoglycerate. It functions in the pathway carbohydrate degradation; glycolysis; pyruvate from D-glyceraldehyde 3-phosphate: step 3/5. Functionally, catalyzes the interconversion of 2-phosphoglycerate and 3-phosphoglycerate. The polypeptide is 2,3-bisphosphoglycerate-independent phosphoglycerate mutase (Methanococcoides burtonii (strain DSM 6242 / NBRC 107633 / OCM 468 / ACE-M)).